The primary structure comprises 369 residues: D-alanine--D-alanine ligase (369 aa).

One can recognise an ATP-grasp domain in the interval 152–359 (KKLFAAEGLP…YPSLLATMVE (208 aa)). ATP is bound at residue 180 to 235 (RERLGLPVFVKPARGGSSIGVSRVSSWDELDAAVAAARDHDPKVIVEAAIAGRELE). Mg(2+)-binding residues include aspartate 314, glutamate 326, and asparagine 328.

This sequence belongs to the D-alanine--D-alanine ligase family. Requires Mg(2+) as cofactor. Mn(2+) serves as cofactor.

It is found in the cytoplasm. It catalyses the reaction 2 D-alanine + ATP = D-alanyl-D-alanine + ADP + phosphate + H(+). Its pathway is cell wall biogenesis; peptidoglycan biosynthesis. Cell wall formation. The chain is D-alanine--D-alanine ligase from Mycolicibacterium paratuberculosis (strain ATCC BAA-968 / K-10) (Mycobacterium paratuberculosis).